The chain runs to 450 residues: Plasmepsin VII (450 aa).

The N-terminal stretch at 1–24 (MNKNIIQIYLFVFILLLKQHIVIL) is a signal peptide. The region spanning 92–441 (YYGEVQIGEQ…DKDNLKIGFV (350 aa)) is the Peptidase A1 domain. Active-site residues include Asp111 and Asp324.

Belongs to the peptidase A1 family.

It is found in the cytoplasm. The polypeptide is Plasmepsin VII (Plasmodium falciparum (isolate NF54)).